Here is a 694-residue protein sequence, read N- to C-terminus: DNA-directed RNA polymerase subunit beta' (694 aa).

Residues cysteine 69, cysteine 71, cysteine 87, and cysteine 90 each contribute to the Zn(2+) site. Mg(2+) contacts are provided by aspartate 489, aspartate 491, and aspartate 493.

This sequence belongs to the RNA polymerase beta' chain family. RpoC1 subfamily. In terms of assembly, in plastids the minimal PEP RNA polymerase catalytic core is composed of four subunits: alpha, beta, beta', and beta''. When a (nuclear-encoded) sigma factor is associated with the core the holoenzyme is formed, which can initiate transcription. Mg(2+) serves as cofactor. Requires Zn(2+) as cofactor.

It is found in the plastid. Its subcellular location is the chloroplast. The enzyme catalyses RNA(n) + a ribonucleoside 5'-triphosphate = RNA(n+1) + diphosphate. In terms of biological role, DNA-dependent RNA polymerase catalyzes the transcription of DNA into RNA using the four ribonucleoside triphosphates as substrates. The sequence is that of DNA-directed RNA polymerase subunit beta' from Adiantum capillus-veneris (Maidenhair fern).